The following is a 138-amino-acid chain: MALLPDKEKLLRNFLRCANWEEKYLYIIELGQRLPELRAEDRSPQNSIQGCQSQVWIVMRQNAQGIIELQGDSDAAIVKGLIAVVFILYDQMTPQDIVNFDVRPWFEKMALTQHLTPSRSQGLEAMIRAIRAKAAALS.

The active-site Cysteine persulfide intermediate is the cysteine 51.

This sequence belongs to the SufE family. In terms of assembly, homodimer. Interacts with SufS.

Its subcellular location is the cytoplasm. The protein operates within cofactor biosynthesis; iron-sulfur cluster biosynthesis. Its function is as follows. Participates in cysteine desulfuration mediated by SufS. Cysteine desulfuration mobilizes sulfur from L-cysteine to yield L-alanine and constitutes an essential step in sulfur metabolism for biosynthesis of a variety of sulfur-containing biomolecules. Functions as a sulfur acceptor for SufS, by mediating the direct transfer of the sulfur atom from the S-sulfanylcysteine of SufS, an intermediate product of cysteine desulfuration process. The sequence is that of Cysteine desulfuration protein SufE from Escherichia coli O8 (strain IAI1).